Consider the following 92-residue polypeptide: Large ribosomal subunit protein eL43 (92 aa).

Zn(2+)-binding residues include C39, C42, C57, and C60. Residues 39–60 form a C4-type zinc finger; it reads CSFCGKTKMKRKAVGIWHCGSC.

It belongs to the eukaryotic ribosomal protein eL43 family. As to quaternary structure, component of the large ribosomal subunit.

The protein resides in the cytoplasm. In terms of biological role, component of the large ribosomal subunit. The ribosome is a large ribonucleoprotein complex responsible for the synthesis of proteins in the cell. In Gallus gallus (Chicken), this protein is Large ribosomal subunit protein eL43 (RPL37A).